A 471-amino-acid polypeptide reads, in one-letter code: UTP--glucose-1-phosphate uridylyltransferase (471 aa).

Residues 87–90, Lys-101, Gln-164, and Gly-193 each bind UTP; that span reads LNGG. Substrate is bound at residue 89–90; the sequence is GG. Substrate-binding positions include His-194 and 222 to 224; that span reads NSD. Residues Asp-224 and Lys-362 each contribute to the UTP site.

This sequence belongs to the UDPGP type 1 family.

The protein localises to the cytoplasm. The enzyme catalyses alpha-D-glucose 1-phosphate + UTP + H(+) = UDP-alpha-D-glucose + diphosphate. Plays a central role as a glucosyl donor in cellular metabolic pathways. In Astragalus penduliflorus (Mountain lentil), this protein is UTP--glucose-1-phosphate uridylyltransferase (UGP).